We begin with the raw amino-acid sequence, 236 residues long: 2,3,4,5-tetrahydropyridine-2,6-dicarboxylate N-acetyltransferase (236 aa).

The protein belongs to the transferase hexapeptide repeat family. DapH subfamily.

It carries out the reaction (S)-2,3,4,5-tetrahydrodipicolinate + acetyl-CoA + H2O = L-2-acetamido-6-oxoheptanedioate + CoA. Its pathway is amino-acid biosynthesis; L-lysine biosynthesis via DAP pathway; LL-2,6-diaminopimelate from (S)-tetrahydrodipicolinate (acetylase route): step 1/3. Functionally, catalyzes the transfer of an acetyl group from acetyl-CoA to tetrahydrodipicolinate. This is 2,3,4,5-tetrahydropyridine-2,6-dicarboxylate N-acetyltransferase from Clostridium botulinum (strain Okra / Type B1).